The chain runs to 344 residues: MRNNPVLPVSDPPLAGENDSDGKGVDDRLFKGSAMTKRGAYAALSYMACAVMLVLFNKAALSSYDFPCVNVITLFQMVSSSLFLYALRRRKIISFTAADSFSIDSASTFVPVKTLFHTLPLAIAYLLYMLASMASVRGVNVPMYTTLRRTTVAFTMVIEYMLTGQRYTRSIIGSVGIILLGAFFAGARDLSFDFYGYGVVFLANISTAVYLATIARTGKSSGLNSFGLMWSNGIICGPILMIWTFICGDLEKTINFPHLLTPGFMVVLLCSCVLAFVLNYCIFLNTTLNSALTQTICGNMKDLFTVGLGWMLFGGLPFDLMNVIGQLFGFFGSGLYAYYKIIGR.

Residues 1–23 form a disordered region; sequence MRNNPVLPVSDPPLAGENDSDGK. The next 9 helical transmembrane spans lie at 41-61, 66-86, 92-112, 114-134, 167-187, 194-214, 226-246, 264-284, and 304-324; these read YAAL…KAAL, FPCV…FLYA, IISF…FVPV, TLFH…ASMA, YTRS…FAGA, FYGY…LATI, FGLM…WTFI, FMVV…CIFL, and FTVG…MNVI.

The protein belongs to the TPT transporter family. UGnT (TC 2.A.7.15) subfamily. In terms of tissue distribution, expressed in roots, leaves, stems, flowers and siliques.

It localises to the golgi apparatus membrane. Its function is as follows. Mediates the transport of UDP-N-acetylglucosamine (UDP-GlcNAc) across the Golgi apparatus membrane. Delivers an essential substrate for the maturation of N-glycans and the GlcNAc-containing glycosyl inositol phosphorylceramide (GIPC) class of sphingolipids in the Golgi apparatus. This Arabidopsis thaliana (Mouse-ear cress) protein is UDP-N-acetylglucosamine transporter UGNT1.